The chain runs to 295 residues: 4-hydroxy-tetrahydrodipicolinate synthase (295 aa).

Thr-47 contributes to the pyruvate binding site. Residue Tyr-135 is the Proton donor/acceptor of the active site. Lys-163 (schiff-base intermediate with substrate) is an active-site residue. Residue Ile-206 coordinates pyruvate.

It belongs to the DapA family. In terms of assembly, homodimer.

The protein resides in the cytoplasm. It carries out the reaction L-aspartate 4-semialdehyde + pyruvate = (2S,4S)-4-hydroxy-2,3,4,5-tetrahydrodipicolinate + H2O + H(+). The protein operates within amino-acid biosynthesis; L-lysine biosynthesis via DAP pathway; (S)-tetrahydrodipicolinate from L-aspartate: step 3/4. Its function is as follows. Catalyzes the condensation of (S)-aspartate-beta-semialdehyde [(S)-ASA] and pyruvate to 4-hydroxy-tetrahydrodipicolinate (HTPA). In Staphylococcus saprophyticus subsp. saprophyticus (strain ATCC 15305 / DSM 20229 / NCIMB 8711 / NCTC 7292 / S-41), this protein is 4-hydroxy-tetrahydrodipicolinate synthase.